We begin with the raw amino-acid sequence, 353 residues long: Chorismate synthase (353 aa).

NADP(+) is bound by residues Arg-48 and Arg-54. Residues 125–127 (RSS), 238–239 (NA), Gly-278, 293–297 (KPTSS), and Arg-319 each bind FMN.

The protein belongs to the chorismate synthase family. In terms of assembly, homotetramer. FMNH2 is required as a cofactor.

The enzyme catalyses 5-O-(1-carboxyvinyl)-3-phosphoshikimate = chorismate + phosphate. Its pathway is metabolic intermediate biosynthesis; chorismate biosynthesis; chorismate from D-erythrose 4-phosphate and phosphoenolpyruvate: step 7/7. Its function is as follows. Catalyzes the anti-1,4-elimination of the C-3 phosphate and the C-6 proR hydrogen from 5-enolpyruvylshikimate-3-phosphate (EPSP) to yield chorismate, which is the branch point compound that serves as the starting substrate for the three terminal pathways of aromatic amino acid biosynthesis. This reaction introduces a second double bond into the aromatic ring system. The protein is Chorismate synthase of Buchnera aphidicola subsp. Schizaphis graminum (strain Sg).